The chain runs to 226 residues: ATP synthase F(0) complex subunit a (226 aa).

6 helical membrane passes run 10–30 (ITPT…PPVI), 68–88 (WSLM…LGLL), 97–117 (QLSM…ILGF), 138–158 (IPML…ALAV), 164–184 (ITAG…LTSI), and 189–209 (AMIT…VALI).

This sequence belongs to the ATPase A chain family. In terms of assembly, component of the ATP synthase complex composed at least of ATP5F1A/subunit alpha, ATP5F1B/subunit beta, ATP5MC1/subunit c (homooctomer), MT-ATP6/subunit a, MT-ATP8/subunit 8, ATP5ME/subunit e, ATP5MF/subunit f, ATP5MG/subunit g, ATP5MK/subunit k, ATP5MJ/subunit j, ATP5F1C/subunit gamma, ATP5F1D/subunit delta, ATP5F1E/subunit epsilon, ATP5PF/subunit F6, ATP5PB/subunit b, ATP5PD/subunit d, ATP5PO/subunit OSCP. ATP synthase complex consists of a soluble F(1) head domain (subunits alpha(3) and beta(3)) - the catalytic core - and a membrane F(0) domain - the membrane proton channel (subunits c, a, 8, e, f, g, k and j). These two domains are linked by a central stalk (subunits gamma, delta, and epsilon) rotating inside the F1 region and a stationary peripheral stalk (subunits F6, b, d, and OSCP). Interacts with DNAJC30; interaction is direct.

The protein localises to the mitochondrion inner membrane. The enzyme catalyses H(+)(in) = H(+)(out). Subunit a, of the mitochondrial membrane ATP synthase complex (F(1)F(0) ATP synthase or Complex V) that produces ATP from ADP in the presence of a proton gradient across the membrane which is generated by electron transport complexes of the respiratory chain. ATP synthase complex consist of a soluble F(1) head domain - the catalytic core - and a membrane F(1) domain - the membrane proton channel. These two domains are linked by a central stalk rotating inside the F(1) region and a stationary peripheral stalk. During catalysis, ATP synthesis in the catalytic domain of F(1) is coupled via a rotary mechanism of the central stalk subunits to proton translocation. With the subunit c (ATP5MC1), forms the proton-conducting channel in the F(0) domain, that contains two crucial half-channels (inlet and outlet) that facilitate proton movement from the mitochondrial intermembrane space (IMS) into the matrix. Protons are taken up via the inlet half-channel and released through the outlet half-channel, following a Grotthuss mechanism. The sequence is that of ATP synthase F(0) complex subunit a from Cricetulus griseus (Chinese hamster).